We begin with the raw amino-acid sequence, 186 residues long: Peptidyl-tRNA hydrolase (186 aa).

TRNA is bound at residue Tyr-14. Catalysis depends on His-19, which acts as the Proton acceptor. TRNA is bound by residues Tyr-61, Asn-63, and Asn-107.

This sequence belongs to the PTH family. In terms of assembly, monomer.

It is found in the cytoplasm. The enzyme catalyses an N-acyl-L-alpha-aminoacyl-tRNA + H2O = an N-acyl-L-amino acid + a tRNA + H(+). Functionally, hydrolyzes ribosome-free peptidyl-tRNAs (with 1 or more amino acids incorporated), which drop off the ribosome during protein synthesis, or as a result of ribosome stalling. Catalyzes the release of premature peptidyl moieties from peptidyl-tRNA molecules trapped in stalled 50S ribosomal subunits, and thus maintains levels of free tRNAs and 50S ribosomes. This chain is Peptidyl-tRNA hydrolase, found in Helicobacter pylori (strain Shi470).